Here is a 119-residue protein sequence, read N- to C-terminus: Large ribosomal subunit protein bL17 (119 aa).

It belongs to the bacterial ribosomal protein bL17 family. As to quaternary structure, part of the 50S ribosomal subunit. Contacts protein L32.

The sequence is that of Large ribosomal subunit protein bL17 from Acholeplasma laidlawii (strain PG-8A).